The primary structure comprises 347 residues: Heat-inducible transcription repressor HrcA (347 aa).

Belongs to the HrcA family.

Negative regulator of class I heat shock genes (grpE-dnaK-dnaJ and groELS operons). Prevents heat-shock induction of these operons. The chain is Heat-inducible transcription repressor HrcA from Nocardia farcinica (strain IFM 10152).